A 511-amino-acid polypeptide reads, in one-letter code: MAYATGITFASRSILPICSRTFLSPLRVASLLVFPEKSSATFFRRVQVPHLFSTSTTTLFSSVKCSIHSTSSPETENQAVFRPNVVDILEERGLLESITSENLRSACSDPKVAPLRVYCGFDPTAESLHLGNLLGIIVLSWFQRCGHQAVGLIGGATGRVGDPSGKSLERPELDADTLEKNIAGITKIIIKILGSNPSPGGSYVIFNNYDWWKDMTMLDFLNKVGRFARVGTMMAKESVKKRLESEQGMSYTEFTYQLLQAYDFLHLFKNEGINVQIGGSDQWGNITAGTDLIRKILQAEEAAYGLTFPLLLKNDGTKFGKSEDGAIWLSPSMLSPYKFYQYFFSVPDVDVIRFLKTLTFLSLDEIKILEDQMSKPGYVPNTAQIKLAEEVTRFVHGEEGLKEAIKATEALRPGAETKLDWNLIERIAEDIPSCSLPIDRVSGLSIVDLSVSAGLFESKSAARRMLKQGGFYMNNERVDDENKRVDEEDIVEGRGLVLSAGKKNKVVVRIS.

Tyr118 is a binding site for L-tyrosine. Asp122 contacts ATP. The 'HIGH' region motif lies at 123-132; sequence PTAESLHLGN. Residues Asp162, Tyr256, Gln260, Asp263, and Gln282 each contribute to the L-tyrosine site. Positions 318 to 322 match the 'KMSKS' region motif; the sequence is KFGKS. Lys321 contacts ATP. The S4 RNA-binding domain maps to 444–510; sequence LSIVDLSVSA…GKKNKVVVRI (67 aa).

The protein belongs to the class-I aminoacyl-tRNA synthetase family.

It localises to the plastid. Its subcellular location is the chloroplast. It is found in the mitochondrion. The enzyme catalyses tRNA(Tyr) + L-tyrosine + ATP = L-tyrosyl-tRNA(Tyr) + AMP + diphosphate + H(+). Catalyzes the attachment of tyrosine to tRNA(Tyr) in a two-step reaction: tyrosine is first activated by ATP to form Tyr-AMP and then transferred to the acceptor end of tRNA(Tyr). This chain is Tyrosine--tRNA ligase, chloroplastic/mitochondrial, found in Arabidopsis thaliana (Mouse-ear cress).